Here is a 579-residue protein sequence, read N- to C-terminus: Arginine--tRNA ligase (579 aa).

A 'HIGH' region motif is present at residues 127–137 (PNLAKEMHVGH).

Belongs to the class-I aminoacyl-tRNA synthetase family. In terms of assembly, monomer.

The protein localises to the cytoplasm. The catalysed reaction is tRNA(Arg) + L-arginine + ATP = L-arginyl-tRNA(Arg) + AMP + diphosphate. The protein is Arginine--tRNA ligase of Ectopseudomonas mendocina (strain ymp) (Pseudomonas mendocina).